Here is a 338-residue protein sequence, read N- to C-terminus: MLNIAITTGEPAGIGPDITVTALLRLLRQPAPRHADVRWHVIGDAALLQARADAIGLGDAWRDAAAALTVVARPLGAPVRTGVLDAANGRYVLDLLDAAIDGCLPDAAGMARYDAMVTAPVQKSTINDAGVPFTGHTEYLAERSRTPRVVMMLAGPQPAHGNAMLRVALATTHLPLREVPDAITPAVLDETLDIVQRDLRARFGMAAPRILVTGLNPHAGEAGHLGREEIEVIEPAVVRARARGIDARGPYPADTLFQPRLLADADCVLAMYHDQGLAPLKYGTFGHGVNITLGLPFVRTSVDHGTALDLAGTGRAEAGSLLEAIDTAVEMARHAAHS.

Residues histidine 136 and threonine 137 each contribute to the substrate site. A divalent metal cation-binding residues include histidine 173, histidine 218, and histidine 273. Residues lysine 281, asparagine 290, and arginine 299 each coordinate substrate.

It belongs to the PdxA family. Homodimer. Requires Zn(2+) as cofactor. It depends on Mg(2+) as a cofactor. The cofactor is Co(2+).

The protein localises to the cytoplasm. The catalysed reaction is 4-(phosphooxy)-L-threonine + NAD(+) = 3-amino-2-oxopropyl phosphate + CO2 + NADH. It participates in cofactor biosynthesis; pyridoxine 5'-phosphate biosynthesis; pyridoxine 5'-phosphate from D-erythrose 4-phosphate: step 4/5. Its function is as follows. Catalyzes the NAD(P)-dependent oxidation of 4-(phosphooxy)-L-threonine (HTP) into 2-amino-3-oxo-4-(phosphooxy)butyric acid which spontaneously decarboxylates to form 3-amino-2-oxopropyl phosphate (AHAP). The protein is 4-hydroxythreonine-4-phosphate dehydrogenase of Ralstonia nicotianae (strain ATCC BAA-1114 / GMI1000) (Ralstonia solanacearum).